The primary structure comprises 883 residues: DNA double-strand break repair Rad50 ATPase (883 aa).

ATP contacts are provided by residues Arg12, 32 to 38 (NGSGKSS), and Gln134. The stretch at 218–420 (ELRGELGGLE…EIGSRRGELK (203 aa)) forms a coiled coil. A Zinc-hook domain is found at 395–492 (IQKARERKEE…ELVEVEKTLK (98 aa)). Zn(2+) contacts are provided by Cys440 and Cys443. Coiled coils occupy residues 452–585 (RKEL…KKLG) and 620–741 (EDLL…LLKE). Residue 790 to 795 (FLSGGE) participates in ATP binding.

It belongs to the SMC family. RAD50 subfamily. In terms of assembly, homodimer. Forms a heterotetramer composed of two Mre11 subunits and two Rad50 subunits. It depends on Zn(2+) as a cofactor.

Functionally, part of the Rad50/Mre11 complex, which is involved in the early steps of DNA double-strand break (DSB) repair. The complex may facilitate opening of the processed DNA ends to aid in the recruitment of HerA and NurA. Rad50 controls the balance between DNA end bridging and DNA resection via ATP-dependent structural rearrangements of the Rad50/Mre11 complex. This is DNA double-strand break repair Rad50 ATPase from Thermococcus kodakarensis (strain ATCC BAA-918 / JCM 12380 / KOD1) (Pyrococcus kodakaraensis (strain KOD1)).